The chain runs to 549 residues: Glucose-6-phosphate isomerase (549 aa).

Glu-353 acts as the Proton donor in catalysis. Residues His-384 and Lys-513 contribute to the active site.

Belongs to the GPI family.

The protein resides in the cytoplasm. The enzyme catalyses alpha-D-glucose 6-phosphate = beta-D-fructose 6-phosphate. It participates in carbohydrate biosynthesis; gluconeogenesis. It functions in the pathway carbohydrate degradation; glycolysis; D-glyceraldehyde 3-phosphate and glycerone phosphate from D-glucose: step 2/4. In terms of biological role, catalyzes the reversible isomerization of glucose-6-phosphate to fructose-6-phosphate. This Brucella abortus (strain S19) protein is Glucose-6-phosphate isomerase.